We begin with the raw amino-acid sequence, 241 residues long: Oil body-associated protein 1B (241 aa).

The span at 1-12 (MEKAVHSSTTSG) shows a compositional bias: polar residues. The interval 1-22 (MEKAVHSSTTSGPAVPGETTKT) is disordered.

This sequence belongs to the OBAP family.

The chain is Oil body-associated protein 1B from Arabidopsis thaliana (Mouse-ear cress).